We begin with the raw amino-acid sequence, 59 residues long: UPF0391 membrane protein AZC_4184 (59 aa).

The next 2 membrane-spanning stretches (helical) occupy residues 4–24 and 30–50; these read WALT…TAVA and IAKI…VMGF.

It belongs to the UPF0391 family.

Its subcellular location is the cell membrane. This is UPF0391 membrane protein AZC_4184 from Azorhizobium caulinodans (strain ATCC 43989 / DSM 5975 / JCM 20966 / LMG 6465 / NBRC 14845 / NCIMB 13405 / ORS 571).